Here is a 426-residue protein sequence, read N- to C-terminus: Spermatogenesis-associated protein 2-like protein (426 aa).

Disordered regions lie at residues 204 to 223, 234 to 256, 269 to 300, and 316 to 347; these read AQDE…TYGA, DESS…PVEL, LWGS…EELE, and SRSG…ASSA. 2 positions are modified to phosphoserine: Ser-318 and Ser-326.

This sequence belongs to the SPATA2 family.

The polypeptide is Spermatogenesis-associated protein 2-like protein (Mus musculus (Mouse)).